The primary structure comprises 928 residues: BCAS3 microtubule associated cell migration factor (928 aa).

At Met1 the chain carries N-acetylmethionine. A WD repeat occupies 69 to 114 (DLNDTSRNLEFHEIHSTGNEPPLLIMIGYSDGMQVWSIPISGEAQE). Lys215 is covalently cross-linked (Glycyl lysine isopeptide (Lys-Gly) (interchain with G-Cter in SUMO1); alternate). Residue Lys215 forms a Glycyl lysine isopeptide (Lys-Gly) (interchain with G-Cter in SUMO2); alternate linkage. 2 required for recruitment to preautophagosomal structure in response to mitophagy regions span residues 254–312 (RGGA…SRRS) and 437–560 (YGGQ…IKAP). A phosphoserine mark is found at Ser461, Ser480, and Ser488. Disordered regions lie at residues 472-515 (TSKQ…PGNP) and 755-777 (TTVI…PQPL). 3 stretches are compositionally biased toward low complexity: residues 480–494 (SPVP…GSPL), 505–514 (NNFTNNNPGN), and 755–771 (TTVI…HGPS). Ser838, Ser886, and Ser898 each carry phosphoserine. A disordered region spans residues 868 to 928 (ESPSRDVVGS…PLSLFPTGFP (61 aa)). Positions 887 to 901 (IETLSNSSGSTSGSI) are enriched in low complexity.

Belongs to the BCAS3 family. Interacts with histone H3, ESR1, KAT2B and PELP1; the interactions occur in a estrogen-dependent manner. Interacts with beta-tubulin and VIM. Interacts (via C-terminal) with PHAF1; the interaction is requrired for the association with the phagophore. Expressed in stomach, liver, lung, kidney, prostate, testis, thyroid gland, adrenal gland, brain, heart, skeletal muscle, colon, spleen, small intestine, placenta, blood leukocyte and mammary epithelial cells. Expressed in undifferentiated ES cells. Expressed in blood islands and nascent blood vessels derived from differentiated ES cells into embryoid bodies (BD). Expressed in endothelial cells. Not detected in brain. Expressed in brain tumors (at protein level). Expressed in brain. Highly expressed in breast cancers and in glioma cell lines.

Its subcellular location is the nucleus. The protein localises to the cytoplasm. The protein resides in the cytoskeleton. It is found in the preautophagosomal structure. Its function is as follows. Plays a role in angiogenesis. Participates in the regulation of cell polarity and directional endothelial cell migration by mediating both the activation and recruitment of CDC42 and the reorganization of the actin cytoskeleton at the cell leading edge. Promotes filipodia formation. Functions synergistically with PELP1 as a transcriptional coactivator of estrogen receptor-responsive genes. Stimulates histone acetyltransferase activity. Binds to chromatin. Plays a regulatory role in autophagic activity. In complex with PHAF1, associates with the preautophagosomal structure during both non-selective and selective autophagy. Probably binds phosphatidylinositol 3-phosphate (PtdIns3P) which would mediate the recruitment preautophagosomal structures. This chain is BCAS3 microtubule associated cell migration factor, found in Homo sapiens (Human).